The primary structure comprises 150 residues: Ankyrin repeat protein C18/B24 (150 aa).

The stretch at 41-73 (ENKTLLYYAVDVNNIQFAKRLLEYGASVTTSRS) is one ANK repeat.

The polypeptide is Ankyrin repeat protein C18/B24 (Vaccinia virus (strain Copenhagen) (VACV)).